Consider the following 148-residue polypeptide: Large ribosomal subunit protein uL15 (148 aa).

The disordered stretch occupies residues 1 to 47 (MTKLEDLRPTPGSVKPRKRVGRGIGSGHGKTSGRGHKGQKSRGSGKV). The segment covering 31–45 (TSGRGHKGQKSRGSG) has biased composition (basic residues).

Belongs to the universal ribosomal protein uL15 family. Part of the 50S ribosomal subunit.

Functionally, binds to the 23S rRNA. The protein is Large ribosomal subunit protein uL15 of Pseudothermotoga lettingae (strain ATCC BAA-301 / DSM 14385 / NBRC 107922 / TMO) (Thermotoga lettingae).